A 396-amino-acid polypeptide reads, in one-letter code: Elongation factor Tu (396 aa).

Residues 10–206 enclose the tr-type G domain; it reads KPHVNVGTIG…ALDTYIPTPE (197 aa). A G1 region spans residues 19 to 26; the sequence is GHVDHGKT. 19–26 is a binding site for GTP; the sequence is GHVDHGKT. Residue threonine 26 coordinates Mg(2+). The G2 stretch occupies residues 60-64; that stretch reads GITIN. The interval 81-84 is G3; that stretch reads DCPG. Residues 81–85 and 136–139 contribute to the GTP site; these read DCPGH and NKAD. Positions 136–139 are G4; that stretch reads NKAD. Residues 174–176 form a G5 region; the sequence is SAK.

This sequence belongs to the TRAFAC class translation factor GTPase superfamily. Classic translation factor GTPase family. EF-Tu/EF-1A subfamily. As to quaternary structure, monomer.

The protein resides in the cytoplasm. The catalysed reaction is GTP + H2O = GDP + phosphate + H(+). Functionally, GTP hydrolase that promotes the GTP-dependent binding of aminoacyl-tRNA to the A-site of ribosomes during protein biosynthesis. The chain is Elongation factor Tu from Bordetella avium (strain 197N).